The primary structure comprises 478 residues: Protein nucleotidyltransferase YdiU (478 aa).

ATP contacts are provided by glycine 84, glycine 86, arginine 87, lysine 107, aspartate 119, glycine 120, arginine 170, and arginine 177. Aspartate 246 serves as the catalytic Proton acceptor. The Mg(2+) site is built by asparagine 247 and aspartate 256. Aspartate 256 is a binding site for ATP.

This sequence belongs to the SELO family. The cofactor is Mg(2+). Mn(2+) serves as cofactor.

The enzyme catalyses L-seryl-[protein] + ATP = 3-O-(5'-adenylyl)-L-seryl-[protein] + diphosphate. The catalysed reaction is L-threonyl-[protein] + ATP = 3-O-(5'-adenylyl)-L-threonyl-[protein] + diphosphate. It catalyses the reaction L-tyrosyl-[protein] + ATP = O-(5'-adenylyl)-L-tyrosyl-[protein] + diphosphate. It carries out the reaction L-histidyl-[protein] + UTP = N(tele)-(5'-uridylyl)-L-histidyl-[protein] + diphosphate. The enzyme catalyses L-seryl-[protein] + UTP = O-(5'-uridylyl)-L-seryl-[protein] + diphosphate. The catalysed reaction is L-tyrosyl-[protein] + UTP = O-(5'-uridylyl)-L-tyrosyl-[protein] + diphosphate. Nucleotidyltransferase involved in the post-translational modification of proteins. It can catalyze the addition of adenosine monophosphate (AMP) or uridine monophosphate (UMP) to a protein, resulting in modifications known as AMPylation and UMPylation. This is Protein nucleotidyltransferase YdiU from Escherichia coli O1:K1 / APEC.